A 135-amino-acid polypeptide reads, in one-letter code: Large ribosomal subunit protein uL16c (135 aa).

Basic residues predominate over residues 1–17; it reads MLSPKRTRFRKQHRGRM. Residues 1-21 are disordered; that stretch reads MLSPKRTRFRKQHRGRMKGVS.

Belongs to the universal ribosomal protein uL16 family. In terms of assembly, part of the 50S ribosomal subunit.

The protein resides in the plastid. The protein localises to the chloroplast. This is Large ribosomal subunit protein uL16c from Amborella trichopoda.